We begin with the raw amino-acid sequence, 83 residues long: Cytotoxin A5 (83 aa).

The N-terminal stretch at 1 to 21 (MKTLLLTMVVVTIVCLDLGYT) is a signal peptide. 4 disulfide bridges follow: cysteine 24/cysteine 43, cysteine 36/cysteine 61, cysteine 65/cysteine 76, and cysteine 77/cysteine 82.

This sequence belongs to the three-finger toxin family. Short-chain subfamily. Orphan group XV sub-subfamily. Expressed by the venom gland.

The protein localises to the secreted. Its subcellular location is the target cell membrane. Non-cytotoxic protein that does not show lytic and hemolytic activities, but can induce aggregation and fusion of sphingomyelin vesicles. It binds to integrin alpha-V/beta-3 (ITGAV/ITGB3) with high affinity, and it inhibits osteoclast differentiation and bone resorption in mice, probably due to binding to integrin alpha-V/beta-3. This is Cytotoxin A5 from Naja atra (Chinese cobra).